A 576-amino-acid chain; its full sequence is Sodium/proton antiporter 1 (576 aa).

Residues 1 to 60 (MAVFPIGSHFAPPHQLTKRHVIATSSPISISTRLPQNVSFSKVSGVTGSTRLSKHGVLVR) constitute a chloroplast transit peptide. A run of 9 helical transmembrane segments spans residues 237 to 257 (TLLWVVGFVTFFLSSILDNLT), 279 to 299 (LGGVVVIAANAGGAWTPIGDV), 320 to 340 (FLPSVVSLAVPLALMSLTSEV), 357 to 377 (APRGKLVFGVGLGALVFVPVF), 379 to 399 (ALTGLPPYMGILLGLGVLWIL), 426 to 446 (GALFFLGILLSVSSLEAAGIL), 462 to 482 (LIASAIGVVSAIIDNVPLVAA), 501 to 521 (LIAFCAGTGGSMLVIGSAAGV), and 541 to 561 (FAFAGYAAGIAAYLAVHNLHF).

This sequence belongs to the NhaD Na(+)/H(+) (TC 2.A.62) antiporter family. In terms of tissue distribution, mostly expressed in mature and senescent leaves, and, to a lower extent, in seeds, roots, shoots, flowers and developing siliques.

Its subcellular location is the plastid. The protein resides in the chloroplast membrane. The protein localises to the chloroplast envelope. Its function is as follows. Na(+)/H(+) antiporter that extrudes sodium in exchange for external protons. This is Sodium/proton antiporter 1 from Arabidopsis thaliana (Mouse-ear cress).